Reading from the N-terminus, the 75-residue chain is Putative defensin-like protein 119 (75 aa).

Residues Met1–Gly25 form the signal peptide. 4 disulfides stabilise this stretch: Cys29–Cys73, Cys39–Cys58, Cys44–Cys67, and Cys48–Cys69.

The protein belongs to the DEFL family.

Its subcellular location is the secreted. This chain is Putative defensin-like protein 119 (LCR53), found in Arabidopsis thaliana (Mouse-ear cress).